The chain runs to 83 residues: MAYKRVIQGKVVKKSGDKTVSLLVERKVVHPKYHKIVKRFKKYLVHDEHNKAKVGDIVTAVECRPISKRKSFRLKEIVQAGVE.

It belongs to the universal ribosomal protein uS17 family. As to quaternary structure, part of the 30S ribosomal subunit.

Functionally, one of the primary rRNA binding proteins, it binds specifically to the 5'-end of 16S ribosomal RNA. This Nitratiruptor sp. (strain SB155-2) protein is Small ribosomal subunit protein uS17.